The primary structure comprises 350 residues: MERHIRYDAASRSLILLDQRYLPTREEDFVCRNTDDIVTALQVMVVRGAPAIGVTAAWGCVLAAYETAESGMETWRPVLDGLIERIANARPTAVNLRWAVERMRAAWHSLGRADLATLITYWTNEAKRIHRDDIAINRRMGEHGAELIDDGDAVMTHCNAGALATAGYGTALGVIRGAVEAGKNITVIANETRPFLQGARLTAFELHEDGIPVTVACDNACGLLMKRGMVQKVVVGADRIAANGDAANKIGTYSVALLAREHGIPFYVAAPLSTIDRETPDGDHIPIENRTPTEVTHVGATQITPDGVPVFNFAFDVTPAHLIAGIVTEMGVLRAPYRESIAEAFRKAGL.

Residues 47 to 49 (RGA), R90, and Q197 contribute to the substrate site. Residue D238 is the Proton donor of the active site. A substrate-binding site is contributed by 248–249 (NK).

The protein belongs to the eIF-2B alpha/beta/delta subunits family. MtnA subfamily.

The enzyme catalyses 5-(methylsulfanyl)-alpha-D-ribose 1-phosphate = 5-(methylsulfanyl)-D-ribulose 1-phosphate. Its pathway is amino-acid biosynthesis; L-methionine biosynthesis via salvage pathway; L-methionine from S-methyl-5-thio-alpha-D-ribose 1-phosphate: step 1/6. Its function is as follows. Catalyzes the interconversion of methylthioribose-1-phosphate (MTR-1-P) into methylthioribulose-1-phosphate (MTRu-1-P). The sequence is that of Methylthioribose-1-phosphate isomerase from Nitratidesulfovibrio vulgaris (strain DP4) (Desulfovibrio vulgaris).